The following is a 204-amino-acid chain: MMRTPITTHPLLLLLLLQQLLQPVQFQEVDTDFETPEDKMEEFREYLEEFRRTGPTRPPTKEKVERRVIIEPGMPLYHRDYCNEEIMRKNVYHKQRCVTEHYFLLMQYDELEKICYNRFVPCKNGVRKCNRSKGLVEGVYCNLTEAFKIPRCKYKSFYRRGYVLITCAWQNEIHKLIPHTINDLVEPPKHRSFLNEDGVFVIPP.

A signal peptide spans 1 to 26 (MMRTPITTHPLLLLLLLQQLLQPVQF). 3 cysteine pairs are disulfide-bonded: Cys97–Cys152, Cys115–Cys167, and Cys122–Cys129. Asn130 and Asn142 each carry an N-linked (GlcNAc...) asparagine glycan.

Belongs to the pancreatic ribonuclease family.

It localises to the secreted. In terms of biological role, does not exhibit any ribonuclease activity. This Macaca nemestrina (Pig-tailed macaque) protein is Inactive ribonuclease-like protein 9 (RNASE9).